A 270-amino-acid chain; its full sequence is MKTVSGVKQLSFTPSIFKKITPEQYLSHLLNQDVRSDGRSVSEFREIVINDNCISTANGSAIIRAGENVFVCGIKAEIAEPFENSPNEGWIVPNLELSPLCSSKFKPGPPSDLAQVVSQELHQTLQQSNLINLQSLCIFEKKAAWVLYADIICLNYDGSAFDYAWAALFAALKTVKLPTAVWDEDLERVICASTLTRPVQLSTEVRSFSWSVFDDKLLADPTDEEEDLSTEFLTIMLNSSKNIVKIIKLGGTHIQPLLLKKCIEVARSKF.

The protein belongs to the RNase PH family. As to quaternary structure, component of the RNA exosome complex. Specifically part of the catalytically inactive RNA exosome core complex (Exo-9) which may associate with the catalytic subunits rrp66 and dis3 in cytoplasmic- and nuclear-specific RNA exosome complex forms. Exo-9 is formed by a hexameric base ring of RNase PH domain-containing subunits and a cap ring consisting of csl4, rrp4 and rrp40.

It is found in the cytoplasm. The protein resides in the nucleus. The protein localises to the nucleolus. In terms of biological role, non-catalytic component of the RNA exosome complex which has 3'-&gt;5' exoribonuclease activity and participates in a multitude of cellular RNA processing and degradation events. In the nucleus, the RNA exosome complex is involved in proper maturation of stable RNA species such as rRNA, snRNA and snoRNA, in the elimination of RNA processing by-products and non-coding 'pervasive' transcripts, such as antisense RNA species and cryptic unstable transcripts (CUTs), and of mRNAs with processing defects, thereby limiting or excluding their export to the cytoplasm. In the cytoplasm, the RNA exosome complex is involved in general mRNA turnover and in RNA surveillance pathways, preventing translation of aberrant mRNAs. The catalytic inactive RNA exosome core complex of 9 subunits (Exo-9) is proposed to play a pivotal role in the binding and presentation of RNA for ribonucleolysis, and to serve as a scaffold for the association with catalytic subunits and accessory proteins or complexes. ski6 is part of the hexameric ring of RNase PH domain-containing subunits proposed to form a central channel which threads RNA substrates for degradation. In Schizosaccharomyces pombe (strain 972 / ATCC 24843) (Fission yeast), this protein is Exosome complex component rrp43 (rrp43).